Reading from the N-terminus, the 425-residue chain is Serine--tRNA ligase (425 aa).

An L-serine-binding site is contributed by 231–233; that stretch reads TAE. Residue 262–264 participates in ATP binding; the sequence is RRE. Residue Glu-285 coordinates L-serine. 349 to 352 serves as a coordination point for ATP; sequence EISS. An L-serine-binding site is contributed by Ser-385.

The protein belongs to the class-II aminoacyl-tRNA synthetase family. Type-1 seryl-tRNA synthetase subfamily. In terms of assembly, homodimer. The tRNA molecule binds across the dimer.

The protein localises to the cytoplasm. It catalyses the reaction tRNA(Ser) + L-serine + ATP = L-seryl-tRNA(Ser) + AMP + diphosphate + H(+). The catalysed reaction is tRNA(Sec) + L-serine + ATP = L-seryl-tRNA(Sec) + AMP + diphosphate + H(+). It functions in the pathway aminoacyl-tRNA biosynthesis; selenocysteinyl-tRNA(Sec) biosynthesis; L-seryl-tRNA(Sec) from L-serine and tRNA(Sec): step 1/1. Catalyzes the attachment of serine to tRNA(Ser). Is also able to aminoacylate tRNA(Sec) with serine, to form the misacylated tRNA L-seryl-tRNA(Sec), which will be further converted into selenocysteinyl-tRNA(Sec). The protein is Serine--tRNA ligase of Aquifex aeolicus (strain VF5).